A 226-amino-acid polypeptide reads, in one-letter code: Putative ABC transporter ATP-binding protein DR_2469 (226 aa).

The 224-residue stretch at 2-225 (IELRHVSHHY…LRVYRERMTW (224 aa)) folds into the ABC transporter domain. 33 to 40 (GSNGSGKS) contributes to the ATP binding site.

This sequence belongs to the ABC transporter superfamily.

Its subcellular location is the cell membrane. Functionally, probably part of an ABC transporter complex. Responsible for energy coupling to the transport system. The chain is Putative ABC transporter ATP-binding protein DR_2469 from Deinococcus radiodurans (strain ATCC 13939 / DSM 20539 / JCM 16871 / CCUG 27074 / LMG 4051 / NBRC 15346 / NCIMB 9279 / VKM B-1422 / R1).